Here is a 525-residue protein sequence, read N- to C-terminus: Tigger transposable element-derived protein 2 (525 aa).

Positions 1–52 constitute an HTH psq-type domain; it reads MLGKRKRVVLTIKDKLDIIKKLEEGISFKKLSVVYGIGESTVRDIKKNKERI. DNA-binding regions (H-T-H motif) lie at residues 28–48 and 100–132; these read FKKLSVVYGIGESTVRDIKKN and TICAKQAKFFFDALGMEGDFNASSGWLTRFKQR. One can recognise an HTH CENPB-type domain in the interval 67–139; that stretch reads KRKSMKSSTY…KQRHGIPKAA (73 aa). A DDE-1 domain is found at 168–385; that stretch reads LQPEQIYGAD…VKSSTITKAW (218 aa). The tract at residues 442 to 474 is disordered; it reads QVLTDSESAEDQTKAAEQKPSSKSRKTELNPEK.

Belongs to the tigger transposable element derived protein family.

Its subcellular location is the nucleus. The sequence is that of Tigger transposable element-derived protein 2 (TIGD2) from Homo sapiens (Human).